The following is a 656-amino-acid chain: UvrABC system protein B (656 aa).

The 158-residue stretch at 23 to 180 (EGIKKGYRFQ…QHLAKIGYER (158 aa)) folds into the Helicase ATP-binding domain. 36 to 43 (GVTGSGKT) serves as a coordination point for ATP. The short motif at 89 to 112 (YYDYYQPEAYVPTKDLYIEKNADI) is the Beta-hairpin element. Residues 426–588 (QVDDLISEIK…ITPKTIVKPL (163 aa)) form the Helicase C-terminal domain. The 36-residue stretch at 614–649 (EEYLSLLEEEMYRAASELRYEDAAKLRDEIFRLREE) folds into the UVR domain.

The protein belongs to the UvrB family. As to quaternary structure, forms a heterotetramer with UvrA during the search for lesions. Interacts with UvrC in an incision complex.

It is found in the cytoplasm. Its function is as follows. The UvrABC repair system catalyzes the recognition and processing of DNA lesions. A damage recognition complex composed of 2 UvrA and 2 UvrB subunits scans DNA for abnormalities. Upon binding of the UvrA(2)B(2) complex to a putative damaged site, the DNA wraps around one UvrB monomer. DNA wrap is dependent on ATP binding by UvrB and probably causes local melting of the DNA helix, facilitating insertion of UvrB beta-hairpin between the DNA strands. Then UvrB probes one DNA strand for the presence of a lesion. If a lesion is found the UvrA subunits dissociate and the UvrB-DNA preincision complex is formed. This complex is subsequently bound by UvrC and the second UvrB is released. If no lesion is found, the DNA wraps around the other UvrB subunit that will check the other stand for damage. This is UvrABC system protein B from Pseudothermotoga lettingae (strain ATCC BAA-301 / DSM 14385 / NBRC 107922 / TMO) (Thermotoga lettingae).